A 182-amino-acid polypeptide reads, in one-letter code: ADP-ribosylation factor 1 (182 aa).

Glycine 2 carries N-myristoyl glycine lipidation. Residues 24 to 31 (GLDAAGKT), 67 to 71 (DVGGQ), and 126 to 129 (NKQD) contribute to the GTP site.

Belongs to the small GTPase superfamily. Arf family.

Its subcellular location is the golgi apparatus. The catalysed reaction is GTP + H2O = GDP + phosphate + H(+). Functionally, GTP-binding protein involved in protein trafficking; may modulate vesicle budding and uncoating within the Golgi apparatus. This is ADP-ribosylation factor 1 (arfA) from Dictyostelium discoideum (Social amoeba).